Reading from the N-terminus, the 371-residue chain is Maltose/maltodextrin import ATP-binding protein MalK (371 aa).

The ABC transporter domain maps to 4–234; that stretch reads VQLQNVTKAW…PADRFVAGFI (231 aa). Residue 36-43 participates in ATP binding; it reads GPSGCGKS.

The protein belongs to the ABC transporter superfamily. Maltooligosaccharide importer (TC 3.A.1.1.1) family. As to quaternary structure, the complex is composed of two ATP-binding proteins (MalK), two transmembrane proteins (MalG and MalK) and a solute-binding protein (MalE).

It is found in the cell inner membrane. The catalysed reaction is D-maltose(out) + ATP + H2O = D-maltose(in) + ADP + phosphate + H(+). Functionally, part of the ABC transporter complex MalEFGK involved in maltose/maltodextrin import. Responsible for energy coupling to the transport system. This chain is Maltose/maltodextrin import ATP-binding protein MalK, found in Shigella flexneri serotype 5b (strain 8401).